Reading from the N-terminus, the 257-residue chain is Dihydroorotate dehydrogenase B (NAD(+)), electron transfer subunit (257 aa).

The FAD-binding FR-type domain occupies 2-100 (ILIEDLTVVS…MGPQGNGFDI (99 aa)). FAD-binding positions include 51-54 (RPIS), 68-70 (VYR), and 75-76 (GT). Residues Cys220, Cys225, Cys228, and Cys244 each coordinate [2Fe-2S] cluster.

It belongs to the PyrK family. As to quaternary structure, heterotetramer of 2 PyrK and 2 PyrD type B subunits. Requires [2Fe-2S] cluster as cofactor. The cofactor is FAD.

It functions in the pathway pyrimidine metabolism; UMP biosynthesis via de novo pathway; orotate from (S)-dihydroorotate (NAD(+) route): step 1/1. In terms of biological role, responsible for channeling the electrons from the oxidation of dihydroorotate from the FMN redox center in the PyrD type B subunit to the ultimate electron acceptor NAD(+). This chain is Dihydroorotate dehydrogenase B (NAD(+)), electron transfer subunit, found in Streptococcus thermophilus (strain ATCC BAA-491 / LMD-9).